The sequence spans 214 residues: Orotate phosphoribosyltransferase (214 aa).

K26 contacts 5-phospho-alpha-D-ribose 1-diphosphate. 34 to 35 (FF) contacts orotate. 5-phospho-alpha-D-ribose 1-diphosphate is bound by residues 72 to 73 (YK), R99, K100, K103, H105, and 124 to 132 (DDVITAGTA). Orotate contacts are provided by T128 and R157.

Belongs to the purine/pyrimidine phosphoribosyltransferase family. PyrE subfamily. Homodimer. Mg(2+) is required as a cofactor.

The catalysed reaction is orotidine 5'-phosphate + diphosphate = orotate + 5-phospho-alpha-D-ribose 1-diphosphate. It participates in pyrimidine metabolism; UMP biosynthesis via de novo pathway; UMP from orotate: step 1/2. In terms of biological role, catalyzes the transfer of a ribosyl phosphate group from 5-phosphoribose 1-diphosphate to orotate, leading to the formation of orotidine monophosphate (OMP). In Pseudomonas fluorescens (strain ATCC BAA-477 / NRRL B-23932 / Pf-5), this protein is Orotate phosphoribosyltransferase.